The primary structure comprises 426 residues: Transcription factor bHLH60 (426 aa).

Polar residues-rich tracts occupy residues 117–137 and 148–172; these read QNGN…SSAN and TDSS…QNNR. The disordered stretch occupies residues 117-201; the sequence is QNGNISGETP…SSEENEKLPY (85 aa). Over residues 191–200 the composition is skewed to basic and acidic residues; it reads KSSEENEKLP. The bHLH domain occupies 210–307; it reads QATDSHSLAE…DEIINHVQSL (98 aa). A disordered region spans residues 367–398; sequence HRQLQQPPTQQWPFDGLNQPVWGREEDQAHGN.

As to quaternary structure, homodimer. Expressed constitutively in roots, leaves, stems, and flowers.

Its subcellular location is the nucleus. The sequence is that of Transcription factor bHLH60 (BHLH60) from Arabidopsis thaliana (Mouse-ear cress).